Consider the following 694-residue polypeptide: Two-component response regulator ORR25 (694 aa).

The Response regulatory domain maps to 17–132 (RVLAVDDSPV…DIQNIWQHVW (116 aa)). Asp68 is subject to 4-aspartylphosphate. Residues 183–242 (TLKRQRVVWTPELHRDFVIAVHELGVDRAVPRKILRMMKVDYMTRENIASHLQKYRLYLK) enclose the HTH myb-type domain. A DNA-binding region (H-T-H motif) is located at residues 213 to 238 (PRKILRMMKVDYMTRENIASHLQKYR). The tract at residues 326-349 (VGHGGSPGNNPVFQPLQNSSNARK) is disordered. Over residues 333-347 (GNNPVFQPLQNSSNA) the composition is skewed to polar residues.

It belongs to the ARR family. Type-B subfamily. Post-translationally, two-component system major event consists of a His-to-Asp phosphorelay between a sensor histidine kinase (HK) and a response regulator (RR). In plants, the His-to-Asp phosphorelay involves an additional intermediate named Histidine-containing phosphotransfer protein (HPt). This multistep phosphorelay consists of a His-Asp-His-Asp sequential transfer of a phosphate group between first a His and an Asp of the HK protein, followed by the transfer to a conserved His of the HPt protein and finally the transfer to an Asp in the receiver domain of the RR protein.

It is found in the nucleus. Transcriptional activator that binds specific DNA sequence. Functions as a response regulator involved in His-to-Asp phosphorelay signal transduction system. Phosphorylation of the Asp residue in the receiver domain activates the ability of the protein to promote the transcription of target genes. May directly activate some type-A response regulators in response to cytokinins. This chain is Two-component response regulator ORR25, found in Oryza sativa subsp. japonica (Rice).